Here is a 176-residue protein sequence, read N- to C-terminus: Inorganic pyrophosphatase (176 aa).

Positions 30, 44, and 56 each coordinate substrate. 3 residues coordinate Mg(2+): D66, D71, and D103. Residue Y140 participates in substrate binding.

Belongs to the PPase family. As to quaternary structure, homohexamer. Mg(2+) serves as cofactor.

The protein localises to the cytoplasm. The enzyme catalyses diphosphate + H2O = 2 phosphate + H(+). Its function is as follows. Catalyzes the hydrolysis of inorganic pyrophosphate (PPi) forming two phosphate ions. The protein is Inorganic pyrophosphatase of Methanothermobacter thermautotrophicus (strain ATCC 29096 / DSM 1053 / JCM 10044 / NBRC 100330 / Delta H) (Methanobacterium thermoautotrophicum).